The chain runs to 360 residues: Photosystem II protein D1 (360 aa).

Helical transmembrane passes span 29–46 (YIGW…TATT), 118–133 (HFLL…QWEL), and 142–156 (WICV…AATA). Position 118 (H118) interacts with chlorophyll a. Y126 provides a ligand contact to pheophytin a. 2 residues coordinate [CaMn4O5] cluster: D170 and E189. Residues 197–218 (FHMLGVAGVFGGSLFSAMHGSL) form a helical membrane-spanning segment. H198 contributes to the chlorophyll a binding site. Residues H215 and 264–265 (SF) contribute to the a quinone site. H215 provides a ligand contact to Fe cation. H272 is a binding site for Fe cation. A helical membrane pass occupies residues 274 to 288 (FLGAWPVIGIWFTAM). [CaMn4O5] cluster-binding residues include H332, E333, D342, and A344. The propeptide occupies 345–360 (SGEQAPVALIAPAING).

It belongs to the reaction center PufL/M/PsbA/D family. PSII is composed of 1 copy each of membrane proteins PsbA, PsbB, PsbC, PsbD, PsbE, PsbF, PsbH, PsbI, PsbJ, PsbK, PsbL, PsbM, PsbT, PsbX, PsbY, PsbZ, Psb30/Ycf12, peripheral proteins PsbO, CyanoQ (PsbQ), PsbU, PsbV and a large number of cofactors. It forms dimeric complexes. The cofactor is The D1/D2 heterodimer binds P680, chlorophylls that are the primary electron donor of PSII, and subsequent electron acceptors. It shares a non-heme iron and each subunit binds pheophytin, quinone, additional chlorophylls, carotenoids and lipids. D1 provides most of the ligands for the Mn4-Ca-O5 cluster of the oxygen-evolving complex (OEC). There is also a Cl(-1) ion associated with D1 and D2, which is required for oxygen evolution. The PSII complex binds additional chlorophylls, carotenoids and specific lipids.. Post-translationally, tyr-161 forms a radical intermediate that is referred to as redox-active TyrZ, YZ or Y-Z. C-terminally processed by CtpA; processing is essential to allow assembly of the oxygen-evolving complex and thus photosynthetic growth.

Its subcellular location is the cellular thylakoid membrane. The catalysed reaction is 2 a plastoquinone + 4 hnu + 2 H2O = 2 a plastoquinol + O2. In terms of biological role, photosystem II (PSII) is a light-driven water:plastoquinone oxidoreductase that uses light energy to abstract electrons from H(2)O, generating O(2) and a proton gradient subsequently used for ATP formation. It consists of a core antenna complex that captures photons, and an electron transfer chain that converts photonic excitation into a charge separation. The D1/D2 (PsbA/PsbD) reaction center heterodimer binds P680, the primary electron donor of PSII as well as several subsequent electron acceptors. In Microcystis aeruginosa (strain NIES-843 / IAM M-2473), this protein is Photosystem II protein D1.